A 670-amino-acid polypeptide reads, in one-letter code: CLK4-associating serine/arginine rich protein (670 aa).

At Ser101 the chain carries Phosphoserine. 2 disordered regions span residues 171–232 (TVAE…GMAD) and 258–670 (EKAM…HYRH). Residues 182-214 (PEEEESPAEEESNSDEDEVIPDIDVEVDVDELN) are compositionally biased toward acidic residues. Residues 265–283 (RRSRRQRREFREKRLRGRK) show a composition bias toward basic residues. Phosphoserine occurs at positions 285 and 294. Positions 290 to 313 (ARRDSPTYDPYKRSPSESSSESRS) are enriched in basic and acidic residues. Position 327 is a phosphothreonine (Thr327). Residues Ser331 and Ser335 each carry the phosphoserine modification. Residues 340 to 355 (AAAAAAAAASGAATGK) are compositionally biased toward low complexity. The span at 356–365 (PPAPPQPGGP) shows a compositional bias: pro residues. Positions 378 to 400 (STSSSSSSASRTSSSRSRSSSSS) are enriched in low complexity. Composition is skewed to basic residues over residues 411–443 (SGRH…RRHS) and 481–491 (RGGRGPRHHSS). The span at 492 to 529 (SRSSWSLSPSRSRSLTRSRSPSLSRSRSLSRSRSQSHS) shows a compositional bias: low complexity. A Phosphoserine modification is found at Ser543. The residue at position 569 (Thr569) is a Phosphothreonine. Residues 581 to 643 (ALNRQFKADK…ERQYSRQSRS (63 aa)) are a coiled coil. Composition is skewed to basic and acidic residues over residues 586–613 (FKAD…ELRA) and 621–637 (KERE…ERQY). The segment covering 638-647 (SRQSRSPSPR) has biased composition (low complexity). The segment covering 655–670 (SRRRSRSRSRSPHYRH) has biased composition (basic residues).

The protein belongs to the splicing factor SR family. Probably interacts with CLK4. In terms of processing, phosphorylated in vitro by CLK4.

It localises to the nucleus. Functionally, probably functions as an alternative splicing regulator. May regulate the mRNA splicing of genes such as CLK1. May act by regulating members of the CLK kinase family. The protein is CLK4-associating serine/arginine rich protein (CLASRP) of Bos taurus (Bovine).